The primary structure comprises 428 residues: Adenylosuccinate synthetase (428 aa).

GTP is bound by residues 12 to 18 (GDEGKGK) and 40 to 42 (GHT). The active-site Proton acceptor is Asp-13. 2 residues coordinate Mg(2+): Asp-13 and Gly-40. IMP-binding positions include 13–16 (DEGK), 38–41 (NAGH), Thr-130, Arg-144, Gln-225, Thr-240, and Arg-304. His-41 acts as the Proton donor in catalysis. A substrate-binding site is contributed by 300-306 (VTTGRAR). Residues Arg-306, 332–334 (KID), and 414–416 (SVG) contribute to the GTP site.

The protein belongs to the adenylosuccinate synthetase family. As to quaternary structure, homodimer. Mg(2+) is required as a cofactor.

The protein resides in the cytoplasm. The enzyme catalyses IMP + L-aspartate + GTP = N(6)-(1,2-dicarboxyethyl)-AMP + GDP + phosphate + 2 H(+). Its pathway is purine metabolism; AMP biosynthesis via de novo pathway; AMP from IMP: step 1/2. Its function is as follows. Plays an important role in the de novo pathway of purine nucleotide biosynthesis. Catalyzes the first committed step in the biosynthesis of AMP from IMP. This chain is Adenylosuccinate synthetase, found in Clostridium acetobutylicum (strain ATCC 824 / DSM 792 / JCM 1419 / IAM 19013 / LMG 5710 / NBRC 13948 / NRRL B-527 / VKM B-1787 / 2291 / W).